Here is a 433-residue protein sequence, read N- to C-terminus: Glutamyl-tRNA reductase (433 aa).

Substrate is bound by residues Thr49–Arg52, Ser114, Glu119–Gln121, and Gln125. Catalysis depends on Cys50, which acts as the Nucleophile. Gly201 to Ile206 is a binding site for NADP(+).

The protein belongs to the glutamyl-tRNA reductase family. Homodimer.

The catalysed reaction is (S)-4-amino-5-oxopentanoate + tRNA(Glu) + NADP(+) = L-glutamyl-tRNA(Glu) + NADPH + H(+). It participates in porphyrin-containing compound metabolism; protoporphyrin-IX biosynthesis; 5-aminolevulinate from L-glutamyl-tRNA(Glu): step 1/2. In terms of biological role, catalyzes the NADPH-dependent reduction of glutamyl-tRNA(Glu) to glutamate 1-semialdehyde (GSA). In Histophilus somni (strain 129Pt) (Haemophilus somnus), this protein is Glutamyl-tRNA reductase.